The sequence spans 483 residues: Arginine/agmatine antiporter (483 aa).

A run of 12 helical transmembrane segments spans residues I11 to F31, A41 to A61, G85 to G105, Y124 to F144, F157 to T177, S208 to G228, A239 to F259, V289 to L309, P336 to F356, M364 to V384, L415 to L435, and E458 to A478.

This sequence belongs to the amino acid-polyamine-organocation (APC) superfamily. Basic amino acid/polyamine antiporter (APA) (TC 2.A.3.2) family.

The protein localises to the cell inner membrane. In terms of biological role, catalyzes the exchange of L-arginine for agmatine. The arginine uptake by the bacterium in the macrophage may be a virulence factor against the host innate immune response. This Chlamydia trachomatis serovar A (strain ATCC VR-571B / DSM 19440 / HAR-13) protein is Arginine/agmatine antiporter (aaxC).